The chain runs to 986 residues: Probable ATP-dependent RNA helicase ddx42 (986 aa).

Disordered stretches follow at residues 1–149, 165–192, and 206–252; these read MSKR…DEDD, AAID…DIDN, and QLAN…IEPL. Over residues 29-82 the composition is skewed to low complexity; sequence SNINNNNNSNNNNNNNNNNNNNNNNNNNKNNIGTGINLNIKNNNNINNNNNKSG. The segment covering 105-117 has biased composition (polar residues); sequence PPKSSMTTLNKSP. Low complexity predominate over residues 119-137; that stretch reads NFENASSNNNNNNNNNNQE. Positions 217 to 236 are enriched in acidic residues; that stretch reads DDDVDYSSLDDDDGYFDDEE. The Q motif motif lies at 305-333; it reads TSFGHYGFDDILLQAIAKQSIETPTPIQK. Positions 336–511 constitute a Helicase ATP-binding domain; sequence IPIALSGRDL…RTILSDPIKI (176 aa). 349-356 contacts ATP; it reads AKTGSGKT. A DEAD box motif is present at residues 459 to 462; sequence DEAD. Residues 522-684 form the Helicase C-terminal domain; that stretch reads DITQIVQVLK…FVPPELIDVA (163 aa). The disordered stretch occupies residues 688–986; the sequence is PHFKRERGGG…FNQRSQYNRR (299 aa). A compositionally biased stretch (gly residues) spans 696 to 723; sequence GGGGGSNRGRGRGGGGVGYRRNSRGGGV. Composition is skewed to low complexity over residues 753–764 and 771–978; these read NPNNTDNSEINN and NNEN…NNFN.

Belongs to the DEAD box helicase family. DDX42 subfamily.

The protein localises to the nucleus. The enzyme catalyses ATP + H2O = ADP + phosphate + H(+). Probable ATP-dependent RNA helicase which may bind to partially double-stranded RNAs (dsRNAs) in order to unwind RNA secondary structures. This chain is Probable ATP-dependent RNA helicase ddx42 (ddx42), found in Dictyostelium discoideum (Social amoeba).